The following is an 83-amino-acid chain: Small ribosomal subunit protein bS16 (83 aa).

The protein belongs to the bacterial ribosomal protein bS16 family.

The polypeptide is Small ribosomal subunit protein bS16 (Pseudomonas fluorescens (strain SBW25)).